The primary structure comprises 466 residues: MKPTLVLVGRSNVGKSTLFNRLTRSRDALVADLPGLTRDRHYGHGKLGDRPYLVVDTGGFEPMATEGILHEMAKQTLQAIDEADVVLFIVDGRSGLTAQDKIVAEQLRRSGRRTLLAVNKTEGMAVSVVTAEFHELGLGEPCAISAAHGDNVNELVTLALQDFPDEPEQERKDDHPKIAIVGRPNVGKSTLVNTLLGEERVIAFDQPGTTRDSIYIDFERNGRTYTLIDTAGLRRRGKVQETVEKFSVVKTLQAIEDANVVILVLDAASEISDQDAHIGGFILEAGRALVLAVNKWDSLDEYQRDMIKRDINRKLPFLQNFARFHYISALHGTGTKGLLPSVDAAYGAAMAHLPTPRLTRTLLAAVEKQPPPRAGMSRPKLRYAHQGGSNPPLIIIHGSALNAVPQTYQRYLENTFRDTFGLEGTPLRIEFRTGRNPYAGKSPAPLTEAEAKRAHRRRRYGRKKYG.

EngA-type G domains are found at residues 3–167 and 176–350; these read PTLV…PDEP and PKIA…GAAM. GTP-binding positions include 9–16, 56–60, 119–122, 182–189, 229–233, and 294–297; these read GRSNVGKS, DTGGF, NKTE, GRPNVGKS, DTAGL, and NKWD. Residues 351-435 form the KH-like domain; sequence AHLPTPRLTR…PLRIEFRTGR (85 aa). The tract at residues 433-466 is disordered; sequence TGRNPYAGKSPAPLTEAEAKRAHRRRRYGRKKYG. Positions 453-466 are enriched in basic residues; sequence RAHRRRRYGRKKYG.

The protein belongs to the TRAFAC class TrmE-Era-EngA-EngB-Septin-like GTPase superfamily. EngA (Der) GTPase family. In terms of assembly, associates with the 50S ribosomal subunit.

In terms of biological role, GTPase that plays an essential role in the late steps of ribosome biogenesis. This chain is GTPase Der, found in Nitrosospira multiformis (strain ATCC 25196 / NCIMB 11849 / C 71).